A 143-amino-acid chain; its full sequence is MKTYIPKKDDIQRKWYVVDATDVVLGRLSTEVASILRGKNKPMFTPNADVGDYVIVINAEKVKLTGKKLEQKELRHYTGYAGGLKSITYKDLMQKDPERAVTHAIVGMLPHNSLGRQMAKKLRVYRGADHDHIAQNPEVLEIK.

This sequence belongs to the universal ribosomal protein uL13 family. As to quaternary structure, part of the 50S ribosomal subunit.

This protein is one of the early assembly proteins of the 50S ribosomal subunit, although it is not seen to bind rRNA by itself. It is important during the early stages of 50S assembly. This Finegoldia magna (strain ATCC 29328 / DSM 20472 / WAL 2508) (Peptostreptococcus magnus) protein is Large ribosomal subunit protein uL13.